The following is a 296-amino-acid chain: Protoheme IX farnesyltransferase 2 (296 aa).

9 helical membrane-spanning segments follow: residues 7 to 27 (LLVA…GGYF), 36 to 56 (PMLL…GCVL), 83 to 103 (LKAA…LLWW), 108 to 128 (LTTA…SLWF), 134 to 154 (YGTL…YCAV), 163 to 183 (ASLL…IAIF), 207 to 227 (IHIV…CLGG), 229 to 249 (AGYG…AIAL), and 265 to 285 (FAFS…DFQV).

It belongs to the UbiA prenyltransferase family. Protoheme IX farnesyltransferase subfamily.

It localises to the cell inner membrane. The catalysed reaction is heme b + (2E,6E)-farnesyl diphosphate + H2O = Fe(II)-heme o + diphosphate. It functions in the pathway porphyrin-containing compound metabolism; heme O biosynthesis; heme O from protoheme: step 1/1. Its function is as follows. Converts heme B (protoheme IX) to heme O by substitution of the vinyl group on carbon 2 of heme B porphyrin ring with a hydroxyethyl farnesyl side group. This chain is Protoheme IX farnesyltransferase 2, found in Pseudomonas paraeruginosa (strain DSM 24068 / PA7) (Pseudomonas aeruginosa (strain PA7)).